The primary structure comprises 562 residues: MOB kinase activator-like 2 (562 aa).

A disordered region spans residues 30–50 (KSGSVQGTTATATATGPPSPP). Positions 31 to 45 (SGSVQGTTATATATG) are enriched in low complexity. The Zn(2+) site is built by Cys-170, Cys-175, His-250, and His-255. 3 disordered regions span residues 304 to 378 (DDTS…TASA), 468 to 523 (NFSN…STTV), and 538 to 562 (GASA…SSTA). Low complexity-rich tracts occupy residues 305–349 (DTSG…NSTS), 357–378 (NSQS…TASA), and 471–481 (NNNNNNHNLNH). Residues 482 to 514 (LNHHHHHHHHQHHHQHHPHGHHGHQGHQGHQGH) are compositionally biased toward basic residues. Low complexity predominate over residues 547 to 562 (AVSAATGGATSASSTA).

The protein belongs to the MOB1/phocein family. Interacts with and activates trc, also interacts with wts.

Its subcellular location is the cytoplasm. It is found in the nucleus. Functionally, required for the normal morphogenesis of a variety of polarized outgrowths including epidermal hairs, bristles, arista laterals, and dendrites. This is MOB kinase activator-like 2 from Drosophila pseudoobscura pseudoobscura (Fruit fly).